A 252-amino-acid chain; its full sequence is MKTVTVKDLVIGTGAPKIIVSLMAKDIARVKSEALAYREADFDILEWRVDHFADHSNVESVMAAAKILRETMPEKPLLFTFRSAKEGGEQAISTEAYIALNRAAIDSGLVDMIDLELFTGDDQVKETVAYAHAHDVKVVMSNHDFHKTPEAEEIIARLRKMQSFDADIPKIALMPQSTSDVLTLLTATLEMQEQYADRPIITMSMAKTGVISRLAGEVFGSAATFGAVKKASAPGQISVNDLRTVLTILHQA.

Residues serine 21, glutamate 46–arginine 48, and arginine 82 each bind 3-dehydroquinate. Histidine 143 acts as the Proton donor/acceptor in catalysis. Lysine 170 functions as the Schiff-base intermediate with substrate in the catalytic mechanism. Residues arginine 213, serine 232, and glutamine 236 each contribute to the 3-dehydroquinate site.

It belongs to the type-I 3-dehydroquinase family. Homodimer.

It carries out the reaction 3-dehydroquinate = 3-dehydroshikimate + H2O. The protein operates within metabolic intermediate biosynthesis; chorismate biosynthesis; chorismate from D-erythrose 4-phosphate and phosphoenolpyruvate: step 3/7. Functionally, involved in the third step of the chorismate pathway, which leads to the biosynthesis of aromatic amino acids. Catalyzes the cis-dehydration of 3-dehydroquinate (DHQ) and introduces the first double bond of the aromatic ring to yield 3-dehydroshikimate. The protein is 3-dehydroquinate dehydratase of Escherichia coli O8 (strain IAI1).